Reading from the N-terminus, the 345-residue chain is Anthranilate phosphoribosyltransferase (345 aa).

5-phospho-alpha-D-ribose 1-diphosphate contacts are provided by residues Gly-84, 87 to 88, Thr-92, 94 to 97, 112 to 120, and Ser-124; these read GD, NIST, and KHGGRSVSS. Residue Gly-84 participates in anthranilate binding. Ser-96 provides a ligand contact to Mg(2+). An anthranilate-binding site is contributed by Arg-170. Asp-229 and Glu-230 together coordinate Mg(2+).

It belongs to the anthranilate phosphoribosyltransferase family. In terms of assembly, homodimer. It depends on Mg(2+) as a cofactor.

The enzyme catalyses N-(5-phospho-beta-D-ribosyl)anthranilate + diphosphate = 5-phospho-alpha-D-ribose 1-diphosphate + anthranilate. It functions in the pathway amino-acid biosynthesis; L-tryptophan biosynthesis; L-tryptophan from chorismate: step 2/5. In terms of biological role, catalyzes the transfer of the phosphoribosyl group of 5-phosphorylribose-1-pyrophosphate (PRPP) to anthranilate to yield N-(5'-phosphoribosyl)-anthranilate (PRA). This chain is Anthranilate phosphoribosyltransferase, found in Leptothrix cholodnii (strain ATCC 51168 / LMG 8142 / SP-6) (Leptothrix discophora (strain SP-6)).